Consider the following 344-residue polypeptide: Dihydroorotase (344 aa).

The Zn(2+) site is built by histidine 13 and histidine 15. Residues 15–17 (HLR) and asparagine 41 each bind substrate. Residues lysine 99, histidine 136, and histidine 174 each contribute to the Zn(2+) site. The residue at position 99 (lysine 99) is an N6-carboxylysine. Histidine 136 contacts substrate. Leucine 219 contacts substrate. Aspartate 247 contributes to the Zn(2+) binding site. Residue aspartate 247 is part of the active site. Substrate-binding residues include histidine 251 and alanine 263.

Belongs to the metallo-dependent hydrolases superfamily. DHOase family. Class II DHOase subfamily. As to quaternary structure, homodimer. The cofactor is Zn(2+).

It carries out the reaction (S)-dihydroorotate + H2O = N-carbamoyl-L-aspartate + H(+). The protein operates within pyrimidine metabolism; UMP biosynthesis via de novo pathway; (S)-dihydroorotate from bicarbonate: step 3/3. In terms of biological role, catalyzes the reversible cyclization of carbamoyl aspartate to dihydroorotate. The sequence is that of Dihydroorotase from Acinetobacter baumannii (strain SDF).